Reading from the N-terminus, the 83-residue chain is MEKIRTLQGRVISNKMQKSAVVAIERFVKHIIYGKFIKRTTKLHIHDEKNECTVGDLIEIRESRPISKTKSWVLVRIIEKTVF.

This sequence belongs to the universal ribosomal protein uS17 family. As to quaternary structure, part of the 30S ribosomal subunit.

One of the primary rRNA binding proteins, it binds specifically to the 5'-end of 16S ribosomal RNA. The polypeptide is Small ribosomal subunit protein uS17 (Buchnera aphidicola subsp. Acyrthosiphon pisum (strain 5A)).